The primary structure comprises 149 residues: SsrA-binding protein (149 aa).

Belongs to the SmpB family.

Its subcellular location is the cytoplasm. Functionally, required for rescue of stalled ribosomes mediated by trans-translation. Binds to transfer-messenger RNA (tmRNA), required for stable association of tmRNA with ribosomes. tmRNA and SmpB together mimic tRNA shape, replacing the anticodon stem-loop with SmpB. tmRNA is encoded by the ssrA gene; the 2 termini fold to resemble tRNA(Ala) and it encodes a 'tag peptide', a short internal open reading frame. During trans-translation Ala-aminoacylated tmRNA acts like a tRNA, entering the A-site of stalled ribosomes, displacing the stalled mRNA. The ribosome then switches to translate the ORF on the tmRNA; the nascent peptide is terminated with the 'tag peptide' encoded by the tmRNA and targeted for degradation. The ribosome is freed to recommence translation, which seems to be the essential function of trans-translation. In Mesoplasma florum (strain ATCC 33453 / NBRC 100688 / NCTC 11704 / L1) (Acholeplasma florum), this protein is SsrA-binding protein.